We begin with the raw amino-acid sequence, 209 residues long: Thymidine kinase (209 aa).

ATP-binding positions include 9–16 (SAMNAGKT) and 88–91 (DEAQ). Glu89 serves as the catalytic Proton acceptor.

This sequence belongs to the thymidine kinase family. In terms of assembly, homotetramer.

The protein localises to the cytoplasm. The enzyme catalyses thymidine + ATP = dTMP + ADP + H(+). This chain is Thymidine kinase, found in Xanthomonas campestris pv. campestris (strain 8004).